The primary structure comprises 317 residues: Epidermal growth factor-like protein (317 aa).

The N-terminal stretch at 1-23 (MDFKIFLFLTAIFMIVGVTVSTA) is a signal peptide. Positions 24–33 (TTNPTAPRAY) are may be required for E.coli agglutination activity. EGF-like domains are found at residues 93 to 128 (HCTPDCPSGCGLGNCTAPNVCTCNKGAGFGPDGKCI), 130 to 161 (VCPGRCLNGQCYGNFCNCNSGFVLEPNGRYCT), 163 to 195 (GCTRNCGPGGQCVGNNQCSCLSGFALNSQGTCQ), 208 to 243 (ACEPLCPKGCVNGECVAPGQCRCKSGYALNSSKVCA), 245 to 280 (KCSQPCYNGFCSAPNVCTCKEGYIKDATSRNGNRCI), and 282 to 315 (YCAAGCPNGTCSAPNFCICKQGYIKQSKGSNVCV). 18 disulfides stabilise this stretch: Cys-98-Cys-107, Cys-102-Cys-113, Cys-115-Cys-127, Cys-131-Cys-140, Cys-135-Cys-145, Cys-147-Cys-160, Cys-164-Cys-174, Cys-168-Cys-180, Cys-182-Cys-194, Cys-213-Cys-222, Cys-217-Cys-228, Cys-230-Cys-242, Cys-246-Cys-255, Cys-250-Cys-261, Cys-263-Cys-279, Cys-283-Cys-292, Cys-287-Cys-298, and Cys-300-Cys-314.

The protein localises to the secreted. Its function is as follows. Binds to lipopolysaccharides (LPS) present on the cell walls of Gram-negative bacteria, behaving as a pattern recognition receptor (PRR). Induces bacterial aggregation and enhances their subsequent clearance by the innate immune response. Binds to the inner core oligosaccharides region of rough-type bacterial LPS. Displays activity against the Gram-negative bacterium E.coli. Does not display any activity against the Gram-positive bacterium S.aureus or the fungi C.albicans. The chain is Epidermal growth factor-like protein from Holotrichia diomphalia (Korean black chafer).